Reading from the N-terminus, the 373-residue chain is 3 beta-hydroxysteroid dehydrogenase/Delta 5--&gt;4-isomerase type 1 (373 aa).

Residues 10–15 (GAGGFL), Y155, and K159 contribute to the NADP(+) site. K159 (proton donor) is an active-site residue. A helical transmembrane segment spans residues 288 to 308 (LALMYWIGFLLEVVSFLLSPV).

Belongs to the 3-beta-HSD family. As to expression, adrenal glands, testes and ovaries.

The protein localises to the endoplasmic reticulum membrane. The protein resides in the mitochondrion membrane. The catalysed reaction is a 3beta-hydroxy-Delta(5)-steroid + NAD(+) = a 3-oxo-Delta(5)-steroid + NADH + H(+). It carries out the reaction pregnenolone + NAD(+) = pregn-5-ene-3,20-dione + NADH + H(+). It catalyses the reaction 3beta-hydroxyandrost-5-en-17-one + NAD(+) = androst-5-ene-3,17-dione + NADH + H(+). The enzyme catalyses androst-5-en-3beta,17beta-diol + NAD(+) = 17beta-hydroxy-androst-5-en-3-one + NADH + H(+). The catalysed reaction is a 3beta-hydroxysteroid + NADP(+) = a 3-oxosteroid + NADPH + H(+). It carries out the reaction 5alpha-androstane-3beta,17beta-diol + NADP(+) = 17beta-hydroxy-5alpha-androstan-3-one + NADPH + H(+). It catalyses the reaction 3beta-hydroxy-5alpha-androstan-17-one + NADP(+) = 5alpha-androstan-3,17-dione + NADPH + H(+). The enzyme catalyses a 3-oxo-Delta(5)-steroid = a 3-oxo-Delta(4)-steroid. The catalysed reaction is pregn-5-ene-3,20-dione = progesterone. It carries out the reaction androst-5-ene-3,17-dione = androst-4-ene-3,17-dione. It catalyses the reaction 17beta-hydroxy-androst-5-en-3-one = testosterone. The enzyme catalyses 5alpha-androstane-3beta,17beta-diol + NAD(+) = 17beta-hydroxy-5alpha-androstan-3-one + NADH + H(+). It participates in steroid hormone biosynthesis. Its pathway is steroid metabolism. Its function is as follows. A bifunctional enzyme responsible for the oxidation and isomerization of 3beta-hydroxy-Delta(5)-steroid precursors to 3-oxo-Delta(4)-steroids, an essential step in steroid hormone biosynthesis. Specifically catalyzes the conversion of pregnenolone to progesterone, 17alpha-hydroxypregnenolone to 17alpha-hydroxyprogesterone, dehydroepiandrosterone (DHEA) to 4-androstenedione and androstenediol to testosterone. Additionally, catalyzes the interconversion between 3beta-hydroxy and 3-oxo-5alpha-androstane steroids controlling the bioavalability of the active forms. Specifically converts dihydrotestosterone to its inactive form 5alpha-androstanediol, that does not bind androgen receptor/AR. Also converts androstanedione, a precursor of testosterone and estrone, to epiandrosterone. Expected to use NAD(+) as preferred electron donor for the 3beta-hydroxy-steroid dehydrogenase activity and NADPH for the 3-ketosteroid reductase activity. In Macaca mulatta (Rhesus macaque), this protein is 3 beta-hydroxysteroid dehydrogenase/Delta 5--&gt;4-isomerase type 1 (HSD3B1).